A 414-amino-acid chain; its full sequence is MSLEMFDKEIFDLTNKELERQCEGLEMIASENFTLPEVMEVMGSILTNKYAEGYPGKRYYGGCEFVDEIETLAIERCKKLFNCKFANVQPNSGSQANQGVYAALINPGDKILGMDLSHGGHLTHGAKVSSSGKMYESCFYGVELDGRIDYEKVREIAKKEKPKLIVCGASAYARVIDFAKFREIADEIGAYLFADIAHIAGLVVAGEHPSPFPYAHVVSSTTHKTLRGPRGGIIMTNDEELAKKINSAIFPGIQGGPLMHVIAAKAVGFKFNLSDEWKVYAKQVRTNAQVLANVLMDRKFKLVSDGTDNHLVLMSFLDREFSGKDADLALGNAGITANKNTVPGEIRSPFITSGLRLGTPALTARGFKEKEMEIVSNYIADILDDVNNEKLQENIKQELKKLASNFIIYERAMF.

(6S)-5,6,7,8-tetrahydrofolate contacts are provided by residues L116 and 120–122 (GHL). At K224 the chain carries N6-(pyridoxal phosphate)lysine. Residues E240 and 348 to 350 (SPF) each bind (6S)-5,6,7,8-tetrahydrofolate.

The protein belongs to the SHMT family. Homodimer. Pyridoxal 5'-phosphate serves as cofactor.

The protein localises to the cytoplasm. The catalysed reaction is (6R)-5,10-methylene-5,6,7,8-tetrahydrofolate + glycine + H2O = (6S)-5,6,7,8-tetrahydrofolate + L-serine. It functions in the pathway one-carbon metabolism; tetrahydrofolate interconversion. Its pathway is amino-acid biosynthesis; glycine biosynthesis; glycine from L-serine: step 1/1. In terms of biological role, catalyzes the reversible interconversion of serine and glycine with tetrahydrofolate (THF) serving as the one-carbon carrier. This reaction serves as the major source of one-carbon groups required for the biosynthesis of purines, thymidylate, methionine, and other important biomolecules. Also exhibits THF-independent aldolase activity toward beta-hydroxyamino acids, producing glycine and aldehydes, via a retro-aldol mechanism. The protein is Serine hydroxymethyltransferase of Campylobacter jejuni subsp. jejuni serotype O:2 (strain ATCC 700819 / NCTC 11168).